The following is a 144-amino-acid chain: Putative pre-16S rRNA nuclease (144 aa).

This sequence belongs to the YqgF nuclease family.

Its subcellular location is the cytoplasm. Could be a nuclease involved in processing of the 5'-end of pre-16S rRNA. In Picosynechococcus sp. (strain ATCC 27264 / PCC 7002 / PR-6) (Agmenellum quadruplicatum), this protein is Putative pre-16S rRNA nuclease.